Here is a 146-residue protein sequence, read N- to C-terminus: MALLKKINTQVNRIMKNSSLVQNICFDRVPLFIPRLSLTVKYCLAVKLLIYLLYCWYIYSEVPSASSKFRSFTFGCVVVYHNKFFPRFIRTHSINSIRTFSKFQVIILFSIEKVTRSESKNHSYSKTDISDLHQGYNNPPSRFISR.

Residues Leu38 to Ser60 form a helical membrane-spanning segment.

This sequence belongs to the UPF0742 family.

The protein resides in the cytoplasm. It localises to the nucleus membrane. The sequence is that of UPF0742 protein SPAC977.02 from Schizosaccharomyces pombe (strain 972 / ATCC 24843) (Fission yeast).